The sequence spans 411 residues: Serpin A12 (411 aa).

An N-terminal signal peptide occupies residues 1–20 (MNLVLGLGLFLAGLLTVKGL). 2 N-linked (GlcNAc...) asparagine glycosylation sites follow: Asn92 and Asn267. The segment at 364 to 382 (GTEGAAGSGAQTLPMETPR) is reactive center loop.

The protein belongs to the serpin family. In terms of assembly, forms a stable complex with KLK7. Glycosylation slightly decreases affinity for heparin, but otherwise has no significant effect on KLK7 inhibitory activity or thermal stability of the protein. As to expression, expressed in visceral adipose tissues.

Its subcellular location is the secreted. Its activity is regulated as follows. Inhibition of KLK7 is enhanced by heparin. In terms of biological role, adipokine that modulates insulin action by specifically inhibiting its target protease KLK7 in white adipose tissues. The sequence is that of Serpin A12 (Serpina12) from Rattus norvegicus (Rat).